Consider the following 458-residue polypeptide: MRGPAVLLTVALATLLAPGAGAPVQSQGSQNKLLLVSFDGFRWNYDQDVDTPNLDAMARDGVKARYMTPAFVTMTSPCHFTLVTGKYIENHGVVHNMYYNTTSKVKLPYHATLGIQRWWDNGSVPIWITAQRQGLRAGSFFYPGGNVTYQGVAVTRSRKEGIAHNYKNETEWRANIDTVMAWFTEEDLDLVTLYFGEPDSTGHRYGPESPERREMVRQVDRTVGYLRESIARNHLTDRLNLIITSDHGMTTVDKRAGDLVEFHKFPNFTFRDIEFELLDYGPNGMLLPKEGRLEKVYDALKDAHPKLHVYKKEAFPEAFHYANNPRVTPLLMYSDLGYVIHGRINVQFNNGEHGFDNKDMDMKTIFRAVGPSFRAGLEVEPFESVHVYELMCRLLGIVPEANDGHLATLLPMLHTESALPPDGRPTLLPKGRSALPPSSRPLLVMGLLGTVILLSEVA.

Residues 1-21 (MRGPAVLLTVALATLLAPGAG) form the signal peptide. Residues 22-433 (APVQSQGSQN…RPTLLPKGRS (412 aa)) are Extracellular-facing. Positions 39 and 75 each coordinate Zn(2+). Residues 72–78 (VTMTSPC) form a required for enzyme activity region. Threonine 75 (nucleophile) is an active-site residue. Asparagine 96 contributes to the substrate binding site. 4 N-linked (GlcNAc...) asparagine glycosylation sites follow: asparagine 100, asparagine 121, asparagine 146, and asparagine 168. Zn(2+)-binding residues include aspartate 199, histidine 203, aspartate 246, and histidine 247. Asparagine 267 carries an N-linked (GlcNAc...) asparagine glycan. Histidine 353 lines the Zn(2+) pocket. A helical membrane pass occupies residues 434 to 454 (ALPPSSRPLLVMGLLGTVILL). The Cytoplasmic portion of the chain corresponds to 455–458 (SEVA).

This sequence belongs to the nucleotide pyrophosphatase/phosphodiesterase family. The cofactor is Zn(2+). N-glycosylated; required for activity and transport to the plasma membrane. As to expression, detected in the colon (at protein level). Expressed in the duodenum, jejunum and liver and at low levels in the ileum. Expression was very low in the esophagus, stomach and colon.

It localises to the cell membrane. It catalyses the reaction a sphingomyelin + H2O = phosphocholine + an N-acylsphing-4-enine + H(+). The enzyme catalyses 1-hexadecanoyl-sn-glycero-3-phosphocholine + H2O = 1-hexadecanoyl-sn-glycerol + phosphocholine + H(+). The catalysed reaction is a 1-O-alkyl-2-acetyl-sn-glycero-3-phosphocholine + H2O = a 1-O-alkyl-2-acetyl-sn-glycerol + phosphocholine + H(+). It carries out the reaction 1-O-octadecyl-2-acetyl-sn-glycero-3-phosphocholine + H2O = 1-O-octadecyl-2-acetyl-sn-glycerol + phosphocholine + H(+). With respect to regulation, inhibited in a dose dependent manner by ATP, imidazole, orthovanadate and zinc ion. Not inhibited by ADP, AMP and EDTA. In terms of biological role, choline-specific phosphodiesterase that hydrolyzes sphingomyelin releasing the ceramide and phosphocholine and therefore is involved in sphingomyelin digestion, ceramide formation, and fatty acid (FA) absorption in the gastrointestinal tract. Also has phospholipase C activity and can also cleave phosphocholine from palmitoyl lyso-phosphatidylcholine and platelet-activating factor (PAF) leading to its inactivation. Does not have nucleotide pyrophosphatase activity. May promote cholesterol absorption by affecting the levels of sphingomyelin derived from either diet or endogenous sources, in the intestinal lumen. The polypeptide is Ectonucleotide pyrophosphatase/phosphodiesterase family member 7 (Homo sapiens (Human)).